The primary structure comprises 294 residues: BOI-related E3 ubiquitin-protein ligase 1 (294 aa).

The WRD domain stretch occupies residues 168–204 (LQERVKNLYVENQIWRDLAQTNEATANNLRSNLEQVL). Residues 183–212 (RDLAQTNEATANNLRSNLEQVLAQVDDLDA) are a coiled coil. The RING-type zinc-finger motif lies at 244 to 281 (CKRCGELTASVLVLPCRHLCLCTVCGSSALLRTCPVCD).

Interacts with the DELLA proteins GAI, RGA, RGL1, RGL2 and RGL3.

The catalysed reaction is S-ubiquitinyl-[E2 ubiquitin-conjugating enzyme]-L-cysteine + [acceptor protein]-L-lysine = [E2 ubiquitin-conjugating enzyme]-L-cysteine + N(6)-ubiquitinyl-[acceptor protein]-L-lysine.. It functions in the pathway protein degradation; proteasomal ubiquitin-dependent pathway. Functionally, E3 ubiquitin-protein ligase involved in regulation of abiotic stress responses. Not involved in ubiquitination of MYB108/BOS1. Has no effect on the stability of the DELLA proteins. This chain is BOI-related E3 ubiquitin-protein ligase 1 (BRG1), found in Arabidopsis thaliana (Mouse-ear cress).